The sequence spans 309 residues: Beta-ketoacyl-[acyl-carrier-protein] synthase III (309 aa).

Residues C111 and H236 contribute to the active site. Residues 237-241 are ACP-binding; the sequence is QANVR. Residue N266 is part of the active site.

This sequence belongs to the thiolase-like superfamily. FabH family. Homodimer.

It is found in the cytoplasm. The enzyme catalyses malonyl-[ACP] + acetyl-CoA + H(+) = 3-oxobutanoyl-[ACP] + CO2 + CoA. It functions in the pathway lipid metabolism; fatty acid biosynthesis. Its function is as follows. Catalyzes the condensation reaction of fatty acid synthesis by the addition to an acyl acceptor of two carbons from malonyl-ACP. Catalyzes the first condensation reaction which initiates fatty acid synthesis and may therefore play a role in governing the total rate of fatty acid production. Possesses both acetoacetyl-ACP synthase and acetyl transacylase activities. Its substrate specificity determines the biosynthesis of branched-chain and/or straight-chain of fatty acids. In Aquifex aeolicus (strain VF5), this protein is Beta-ketoacyl-[acyl-carrier-protein] synthase III.